The chain runs to 135 residues: MGCCGSSTVDAEEHLDYSGGNVTLVTDQKNWDNTMEEVAEHGKTVVLKFSAIWCTPCRNAAPLFAELSLKYPDIVFVSVDVDEMPELVTQYDVRATPTFIFMKNNEEIDKLVGGNHEDLQEKFEQLNRPKLYDDV.

The Thioredoxin domain occupies 13–128 (EHLDYSGGNV…LQEKFEQLNR (116 aa)). Residues Cys54 and Cys57 each act as nucleophile in the active site. The cysteines at positions 54 and 57 are disulfide-linked.

The protein belongs to the thioredoxin family. Plant H-type subfamily.

The protein localises to the cytoplasm. In terms of biological role, probable thiol-disulfide oxidoreductase that may be involved in the redox regulation of a number of cytosolic enzymes. The polypeptide is Thioredoxin H5 (Oryza sativa subsp. japonica (Rice)).